Consider the following 86-residue polypeptide: Curamycin polyketide synthase acyl carrier protein (86 aa).

In terms of domain architecture, Carrier spans 7-86 (QVTVEELATL…VVNGALASGA (80 aa)). Residue S44 is modified to O-(pantetheine 4'-phosphoryl)serine.

4'-phosphopantetheine is transferred from CoA to a specific serine of the apo-ACP-like protein.

The protein operates within antibiotic biosynthesis; curamycin biosynthesis. Acyl carrier protein. This chain is Curamycin polyketide synthase acyl carrier protein (curE), found in Streptomyces cyaneus (Streptomyces curacoi).